We begin with the raw amino-acid sequence, 294 residues long: uncharacterized protein (294 aa).

The disordered stretch occupies residues 1 to 215 (MTTAITPDKK…DQDDDDQKDL (215 aa)). Basic residues-rich tracts occupy residues 27–43 (TKPR…KSKK) and 50–78 (AKKR…KKAP). Residues 79 to 88 (MKAPSKPAAK) show a composition bias toward low complexity. Over residues 92 to 102 (QQAQASLQKPI) the composition is skewed to polar residues. Over residues 118-136 (PRPPTPIPPTGVKPEPAPR) the composition is skewed to pro residues. The segment covering 145–160 (SVSSTTPRTSATTGTT) has biased composition (low complexity).

This is an uncharacterized protein from Caenorhabditis elegans.